Here is a 405-residue protein sequence, read N- to C-terminus: Diaminopimelate decarboxylase (405 aa).

An N6-(pyridoxal phosphate)lysine modification is found at lysine 46. Residues glycine 225 and 259-262 (EPGR) each bind pyridoxal 5'-phosphate. Substrate is bound by residues arginine 262, arginine 298, and tyrosine 302. Residue cysteine 329 is the Proton donor of the active site. Substrate is bound by residues glutamate 330 and tyrosine 358. Residue tyrosine 358 coordinates pyridoxal 5'-phosphate.

Belongs to the Orn/Lys/Arg decarboxylase class-II family. LysA subfamily. As to quaternary structure, homodimer. Requires pyridoxal 5'-phosphate as cofactor.

The catalysed reaction is meso-2,6-diaminopimelate + H(+) = L-lysine + CO2. It functions in the pathway amino-acid biosynthesis; L-lysine biosynthesis via DAP pathway; L-lysine from DL-2,6-diaminopimelate: step 1/1. Functionally, specifically catalyzes the decarboxylation of meso-diaminopimelate (meso-DAP) to L-lysine. This is Diaminopimelate decarboxylase from Helicobacter pylori (strain J99 / ATCC 700824) (Campylobacter pylori J99).